The primary structure comprises 338 residues: Ferredoxin--NADP reductase (338 aa).

Residues D35, Q43, Y48, A88, F122, D289, and T330 each contribute to the FAD site.

Belongs to the ferredoxin--NADP reductase type 2 family. Homodimer. The cofactor is FAD.

It carries out the reaction 2 reduced [2Fe-2S]-[ferredoxin] + NADP(+) + H(+) = 2 oxidized [2Fe-2S]-[ferredoxin] + NADPH. The polypeptide is Ferredoxin--NADP reductase (Ehrlichia chaffeensis (strain ATCC CRL-10679 / Arkansas)).